The following is a 183-amino-acid chain: D-glycero-alpha-D-manno-heptose-1,7-bisphosphate 7-phosphatase (183 aa).

Zn(2+) contacts are provided by C93, H95, C108, and C110.

It belongs to the GmhB family.

It localises to the cytoplasm. The catalysed reaction is D-glycero-alpha-D-manno-heptose 1,7-bisphosphate + H2O = D-glycero-alpha-D-manno-heptose 1-phosphate + phosphate. The protein operates within nucleotide-sugar biosynthesis; GDP-D-glycero-alpha-D-manno-heptose biosynthesis; GDP-D-glycero-alpha-D-manno-heptose from D-glycero-alpha-D-manno-heptose 7-phosphate: step 2/3. In terms of biological role, converts the D-glycero-alpha-D-manno-heptose 1,7-bisphosphate intermediate into D-glycero-alpha-D-manno-heptose 1-phosphate by removing the phosphate group at the C-7 position. The polypeptide is D-glycero-alpha-D-manno-heptose-1,7-bisphosphate 7-phosphatase (gmhB2) (Photorhabdus laumondii subsp. laumondii (strain DSM 15139 / CIP 105565 / TT01) (Photorhabdus luminescens subsp. laumondii)).